The primary structure comprises 383 residues: S-adenosylmethionine synthase 1 (383 aa).

An ATP-binding site is contributed by H15. D17 lines the Mg(2+) pocket. A K(+)-binding site is contributed by E43. L-methionine contacts are provided by E56 and Q99. Residues 99–109 are flexible loop; the sequence is QSPDIDLGVSR. ATP contacts are provided by residues 162-164, 228-229, D237, 243-244, A260, and K264; these read DGK, RF, and RK. L-methionine is bound at residue D237. K268 is a binding site for L-methionine.

This sequence belongs to the AdoMet synthase family. Homotetramer; dimer of dimers. Requires Mg(2+) as cofactor. The cofactor is K(+).

The protein localises to the cytoplasm. It catalyses the reaction L-methionine + ATP + H2O = S-adenosyl-L-methionine + phosphate + diphosphate. Its pathway is amino-acid biosynthesis; S-adenosyl-L-methionine biosynthesis; S-adenosyl-L-methionine from L-methionine: step 1/1. Functionally, catalyzes the formation of S-adenosylmethionine (AdoMet) from methionine and ATP. The overall synthetic reaction is composed of two sequential steps, AdoMet formation and the subsequent tripolyphosphate hydrolysis which occurs prior to release of AdoMet from the enzyme. In Rhodospirillum rubrum (strain ATCC 11170 / ATH 1.1.1 / DSM 467 / LMG 4362 / NCIMB 8255 / S1), this protein is S-adenosylmethionine synthase 1.